Reading from the N-terminus, the 137-residue chain is Large-conductance mechanosensitive channel (137 aa).

2 consecutive transmembrane segments (helical) span residues 14-34 and 81-101; these read VLDL…INSL and GSFL…FLIV.

Belongs to the MscL family. In terms of assembly, homopentamer.

It is found in the cell membrane. Its function is as follows. Channel that opens in response to stretch forces in the membrane lipid bilayer. May participate in the regulation of osmotic pressure changes within the cell. The protein is Large-conductance mechanosensitive channel of Chloroflexus aggregans (strain MD-66 / DSM 9485).